We begin with the raw amino-acid sequence, 508 residues long: ATP synthase subunit alpha, mitochondrial (508 aa).

171–178 (GDRQTGKT) provides a ligand contact to ATP.

This sequence belongs to the ATPase alpha/beta chains family. In terms of assembly, F-type ATPases have 2 components, CF(1) - the catalytic core - and CF(0) - the membrane proton channel. CF(1) has five subunits: alpha(3), beta(3), gamma(1), delta(1), epsilon(1). CF(0) has three main subunits: a, b and c.

The protein localises to the mitochondrion. The protein resides in the mitochondrion inner membrane. Functionally, mitochondrial membrane ATP synthase (F(1)F(0) ATP synthase or Complex V) produces ATP from ADP in the presence of a proton gradient across the membrane which is generated by electron transport complexes of the respiratory chain. F-type ATPases consist of two structural domains, F(1) - containing the extramembraneous catalytic core, and F(0) - containing the membrane proton channel, linked together by a central stalk and a peripheral stalk. During catalysis, ATP synthesis in the catalytic domain of F(1) is coupled via a rotary mechanism of the central stalk subunits to proton translocation. Subunits alpha and beta form the catalytic core in F(1). Rotation of the central stalk against the surrounding alpha(3)beta(3) subunits leads to hydrolysis of ATP in three separate catalytic sites on the beta subunits. Subunit alpha does not bear the catalytic high-affinity ATP-binding sites. The sequence is that of ATP synthase subunit alpha, mitochondrial (ATPA) from Phaseolus vulgaris (Kidney bean).